We begin with the raw amino-acid sequence, 296 residues long: Peroxidase P7 (296 aa).

Residue Gln-1 is modified to Pyrrolidone carboxylic acid. Cystine bridges form between Cys-11/Cys-91, Cys-44/Cys-49, Cys-97/Cys-292, and Cys-176/Cys-201. His-42 serves as the catalytic Proton acceptor. Positions 43, 46, 48, 50, and 52 each coordinate Ca(2+). Residue Pro-139 participates in substrate binding. His-169 contacts heme b. Thr-170 lines the Ca(2+) pocket. The N-linked (GlcNAc...) asparagine glycan is linked to Asn-185. Ca(2+)-binding residues include Asp-216, Ser-219, and Asp-224.

The protein belongs to the peroxidase family. Classical plant (class III) peroxidase subfamily. Ca(2+) is required as a cofactor. Heme b serves as cofactor.

The enzyme catalyses 2 a phenolic donor + H2O2 = 2 a phenolic radical donor + 2 H2O. Functionally, removal of H(2)O(2), oxidation of toxic reductants, biosynthesis and degradation of lignin, suberization, auxin catabolism, response to environmental stresses such as wounding, pathogen attack and oxidative stress. These functions might be dependent on each isozyme/isoform in each plant tissue. The polypeptide is Peroxidase P7 (Brassica rapa subsp. rapa (Turnip)).